The following is a 1097-amino-acid chain: Platelet-derived growth factor receptor beta (1097 aa).

The N-terminal stretch at 1 to 31 is a signal peptide; it reads MGLPEVMPASVLRGQLLLFVLLLLGPQISQG. Ig-like C2-type domains are found at residues 32–119, 128–209, and 213–308; these read LVIT…YIFV, PMDS…YSLQ, and INVS…INVT. Over 32-531 the chain is Extracellular; it reads LVITPPGPEF…VVPHSLPFKV (500 aa). N-linked (GlcNAc...) asparagine glycosylation is found at Asn44, Asn88, and Asn102. A disulfide bond links Cys53 and Cys99. Cysteines 148 and 189 form a disulfide. N-linked (GlcNAc...) asparagine glycosylation occurs at Asn214. Cys234 and Cys290 are disulfide-bonded. Asn291, Asn306, Asn353, Asn370, Asn444, Asn467, and Asn478 each carry an N-linked (GlcNAc...) asparagine glycan. One can recognise an Ig-like C2-type 4 domain in the interval 415-523; it reads PVRVLELSES…GRDSQEVTVV (109 aa). Residues Cys435 and Cys507 are joined by a disulfide bond. Residues 532–552 traverse the membrane as a helical segment; sequence VVISAILALVVLTVISLIILI. Residues 553 to 1097 lie on the Cytoplasmic side of the membrane; that stretch reads MLWQRKPRYE…PLAEAEDSFL (545 aa). Phosphotyrosine; by autocatalysis is present on residues Tyr561, Tyr578, and Tyr580. In terms of domain architecture, Protein kinase spans 599 to 961; sequence LVLGRTLGSG…QLVLLLERLL (363 aa). Residues 605 to 613 and Lys633 each bind ATP; that span reads LGSGAFGQV. Tyr685 is subject to Phosphotyrosine; by ABL1 and ABL2. Phosphotyrosine; by autocatalysis occurs at positions 715, 739, 750, 762, 770, 774, and 777. Catalysis depends on Asp825, which acts as the Proton acceptor. Phosphotyrosine; by autocatalysis is present on Tyr856. Tyr933 and Tyr969 each carry phosphotyrosine; by ABL1 and ABL2. A phosphotyrosine; by autocatalysis mark is found at Tyr1008 and Tyr1020. The interval 1016–1097 is disordered; that stretch reads TDNDYIIPLP…PLAEAEDSFL (82 aa). The segment covering 1042 to 1059 has biased composition (polar residues); the sequence is SLASSTLNEVNTSSTISC. Residues 1072–1081 show a composition bias toward low complexity; the sequence is EPEAQLEQPQ.

This sequence belongs to the protein kinase superfamily. Tyr protein kinase family. CSF-1/PDGF receptor subfamily. As to quaternary structure, interacts with homodimeric PDGFB and PDGFD, and with heterodimers formed by PDGFA and PDGFB. May also interact with homodimeric PDGFC. Monomer in the absence of bound ligand. Interaction with homodimeric PDGFB, heterodimers formed by PDGFA and PDGFB or homodimeric PDGFD, leads to receptor dimerization, where both PDGFRA homodimers and heterodimers with PDGFRB are observed. Interacts with SH2B2/APS. Interacts directly (tyrosine phosphorylated) with SHB. Interacts (tyrosine phosphorylated) with PIK3R1 and RASA1. Interacts (tyrosine phosphorylated) with CBL. Interacts (tyrosine phosphorylated) with SRC and SRC family kinases. Interacts (tyrosine phosphorylated) with PIK3C2B, maybe indirectly. Interacts (tyrosine phosphorylated) with SHC1, GRB7, GRB10 and NCK1. Interaction with GRB2 is mediated by SHC1. Interacts (via C-terminus) with NHERF1. In terms of processing, N-glycosylated. Post-translationally, ubiquitinated. After autophosphorylation, the receptor is polyubiquitinated, leading to its degradation. Autophosphorylated on tyrosine residues upon ligand binding. Autophosphorylation occurs in trans, i.e. one subunit of the dimeric receptor phosphorylates tyrosine residues on the other subunit. Phosphorylation at Tyr-578, and to a lesser degree, Tyr-580 is important for interaction with SRC. Phosphorylation at Tyr-715 is important for interaction with GRB2. Phosphorylation at Tyr-739 and Tyr-750 is important for interaction with PIK3R1. Phosphorylation at Tyr-750 is important for interaction with NCK1. Phosphorylation at Tyr-770 and Tyr-856 is important for interaction with RASA1/GAP. Phosphorylation at Tyr-856 is important for efficient phosphorylation of PLCG1 and PTPN11, resulting in increased phosphorylation of AKT1, MAPK1/ERK2 and/or MAPK3/ERK1, PDCD6IP/ALIX and STAM, and in increased cell proliferation. Phosphorylation at Tyr-1008 is important for interaction with PTPN11. Phosphorylation at Tyr-1008 and Tyr-1020 is important for interaction with PLCG1. Dephosphorylated by PTPRJ at Tyr-750, Tyr-856, Tyr-1008 and Tyr-1020. Dephosphorylated by PTPN2 at Tyr-578 and Tyr-1020.

It localises to the cell membrane. It is found in the cytoplasmic vesicle. Its subcellular location is the lysosome lumen. The catalysed reaction is L-tyrosyl-[protein] + ATP = O-phospho-L-tyrosyl-[protein] + ADP + H(+). Its activity is regulated as follows. Present in an inactive conformation in the absence of bound ligand. Binding of PDGFB and/or PDGFD leads to dimerization and activation by autophosphorylation on tyrosine residues. Functionally, tyrosine-protein kinase that acts as a cell-surface receptor for homodimeric PDGFB and PDGFD and for heterodimers formed by PDGFA and PDGFB, and plays an essential role in the regulation of embryonic development, cell proliferation, survival, differentiation, chemotaxis and migration. Plays an essential role in blood vessel development by promoting proliferation, migration and recruitment of pericytes and smooth muscle cells to endothelial cells. Plays a role in the migration of vascular smooth muscle cells and the formation of neointima at vascular injury sites. Required for normal development of the cardiovascular system. Required for normal recruitment of pericytes (mesangial cells) in the kidney glomerulus, and for normal formation of a branched network of capillaries in kidney glomeruli. Promotes rearrangement of the actin cytoskeleton and the formation of membrane ruffles. Binding of its cognate ligands - homodimeric PDGFB, heterodimers formed by PDGFA and PDGFB or homodimeric PDGFD -leads to the activation of several signaling cascades; the response depends on the nature of the bound ligand and is modulated by the formation of heterodimers between PDGFRA and PDGFRB. Phosphorylates PLCG1, PIK3R1, PTPN11, RASA1/GAP, CBL, SHC1 and NCK1. Activation of PLCG1 leads to the production of the cellular signaling molecules diacylglycerol and inositol 1,4,5-trisphosphate, mobilization of cytosolic Ca(2+) and the activation of protein kinase C. Phosphorylation of PIK3R1, the regulatory subunit of phosphatidylinositol 3-kinase, leads to the activation of the AKT1 signaling pathway. Phosphorylation of SHC1, or of the C-terminus of PTPN11, creates a binding site for GRB2, resulting in the activation of HRAS, RAF1 and down-stream MAP kinases, including MAPK1/ERK2 and/or MAPK3/ERK1. Promotes phosphorylation and activation of SRC family kinases. Promotes phosphorylation of PDCD6IP/ALIX and STAM. Receptor signaling is down-regulated by protein phosphatases that dephosphorylate the receptor and its down-stream effectors, and by rapid internalization of the activated receptor. This chain is Platelet-derived growth factor receptor beta (Pdgfrb), found in Rattus norvegicus (Rat).